Reading from the N-terminus, the 200-residue chain is Potassium-transporting ATPase KdpC subunit (200 aa).

The chain crosses the membrane as a helical span at residues 6–26 (PAVVLLILLTLITGIAYPLLT).

Belongs to the KdpC family. The system is composed of three essential subunits: KdpA, KdpB and KdpC.

The protein localises to the cell inner membrane. Its function is as follows. Part of the high-affinity ATP-driven potassium transport (or Kdp) system, which catalyzes the hydrolysis of ATP coupled with the electrogenic transport of potassium into the cytoplasm. This subunit acts as a catalytic chaperone that increases the ATP-binding affinity of the ATP-hydrolyzing subunit KdpB by the formation of a transient KdpB/KdpC/ATP ternary complex. The polypeptide is Potassium-transporting ATPase KdpC subunit (Yersinia enterocolitica serotype O:8 / biotype 1B (strain NCTC 13174 / 8081)).